The primary structure comprises 149 residues: Putative inactive group IIC secretory phospholipase A2 (149 aa).

The first 18 residues, 1 to 18 (MKVIAILTLLLFCSPTHS), serve as a signal peptide directing secretion. 4 disulfide bridges follow: Cys-44-Cys-142, Cys-77-Cys-107, Cys-95-Cys-112, and Cys-97-Cys-105. Ca(2+)-binding residues include Tyr-45, Gly-47, and Gly-49.

It belongs to the phospholipase A2 family. Ca(2+) is required as a cofactor.

Its subcellular location is the secreted. Its function is as follows. Inactive phospholipase. In Homo sapiens (Human), this protein is Putative inactive group IIC secretory phospholipase A2 (PLA2G2C).